A 165-amino-acid chain; its full sequence is 6,7-dimethyl-8-ribityllumazine synthase (165 aa).

Residues tyrosine 30, 61 to 63 (ALE), and 90 to 92 (VVI) each bind 5-amino-6-(D-ribitylamino)uracil. 95–96 (ET) provides a ligand contact to (2S)-2-hydroxy-3-oxobutyl phosphate. Histidine 98 acts as the Proton donor in catalysis. Asparagine 123 is a binding site for 5-amino-6-(D-ribitylamino)uracil. Arginine 137 contributes to the (2S)-2-hydroxy-3-oxobutyl phosphate binding site.

This sequence belongs to the DMRL synthase family.

The enzyme catalyses (2S)-2-hydroxy-3-oxobutyl phosphate + 5-amino-6-(D-ribitylamino)uracil = 6,7-dimethyl-8-(1-D-ribityl)lumazine + phosphate + 2 H2O + H(+). Its pathway is cofactor biosynthesis; riboflavin biosynthesis; riboflavin from 2-hydroxy-3-oxobutyl phosphate and 5-amino-6-(D-ribitylamino)uracil: step 1/2. Its function is as follows. Catalyzes the formation of 6,7-dimethyl-8-ribityllumazine by condensation of 5-amino-6-(D-ribitylamino)uracil with 3,4-dihydroxy-2-butanone 4-phosphate. This is the penultimate step in the biosynthesis of riboflavin. The sequence is that of 6,7-dimethyl-8-ribityllumazine synthase from Xanthobacter autotrophicus (strain ATCC BAA-1158 / Py2).